The primary structure comprises 475 residues: Dihydrolipoyl dehydrogenase (475 aa).

FAD is bound by residues 39 to 47 (EKDAYGGTC), K56, and A118. A disulfide bridge links C47 with C52. Residues 186 to 190 (GGGYI), E209, and 275 to 278 (AVGR) each bind NAD(+). FAD is bound by residues D318 and A327. H451 serves as the catalytic Proton acceptor.

Belongs to the class-I pyridine nucleotide-disulfide oxidoreductase family. In terms of assembly, homodimer. FAD serves as cofactor.

The protein resides in the cytoplasm. The enzyme catalyses N(6)-[(R)-dihydrolipoyl]-L-lysyl-[protein] + NAD(+) = N(6)-[(R)-lipoyl]-L-lysyl-[protein] + NADH + H(+). This is Dihydrolipoyl dehydrogenase (lpdA) from Haloferax volcanii (strain ATCC 29605 / DSM 3757 / JCM 8879 / NBRC 14742 / NCIMB 2012 / VKM B-1768 / DS2) (Halobacterium volcanii).